The chain runs to 154 residues: Small ribosomal subunit protein bS6 (154 aa).

Residues 97–154 (DSEPSAMMQKRDRDDRKDRERGRRRDDEGFGGGGGFGGDRGDRGDRGDRGERSFGGEG) are disordered. Basic and acidic residues-rich tracts occupy residues 105 to 124 (QKRDRDDRKDRERGRRRDDE) and 135 to 154 (DRGDRGDRGDRGERSFGGEG).

Belongs to the bacterial ribosomal protein bS6 family.

Functionally, binds together with bS18 to 16S ribosomal RNA. The chain is Small ribosomal subunit protein bS6 from Methylobacterium radiotolerans (strain ATCC 27329 / DSM 1819 / JCM 2831 / NBRC 15690 / NCIMB 10815 / 0-1).